The chain runs to 192 residues: MKKVGVLSLQGDFAAHGAALERAGAQPVFVREREQLNQIEGLILPGGESTTMLKLLRYEDLFDDVAEFGRTKPVFGTCAGAILMAKGVTNPAQESFGLVDIEVERNAYGRQTDSRIAQVRPFPDFENRTAPGELKAVFIRAPIIRRIEDGVRVLASYQGDPVLIEQGRFLVATFHPELTDDARVHSLFLSKL.

L-glutamine is bound at residue glycine 47–serine 49. Cysteine 78 functions as the Nucleophile in the catalytic mechanism. Residues arginine 105 and isoleucine 139–arginine 140 contribute to the L-glutamine site. Active-site charge relay system residues include histidine 175 and glutamate 177.

It belongs to the glutaminase PdxT/SNO family. In terms of assembly, in the presence of PdxS, forms a dodecamer of heterodimers. Only shows activity in the heterodimer.

The enzyme catalyses aldehydo-D-ribose 5-phosphate + D-glyceraldehyde 3-phosphate + L-glutamine = pyridoxal 5'-phosphate + L-glutamate + phosphate + 3 H2O + H(+). The catalysed reaction is L-glutamine + H2O = L-glutamate + NH4(+). It participates in cofactor biosynthesis; pyridoxal 5'-phosphate biosynthesis. Functionally, catalyzes the hydrolysis of glutamine to glutamate and ammonia as part of the biosynthesis of pyridoxal 5'-phosphate. The resulting ammonia molecule is channeled to the active site of PdxS. This chain is Pyridoxal 5'-phosphate synthase subunit PdxT, found in Solibacter usitatus (strain Ellin6076).